The primary structure comprises 514 residues: ATP synthase subunit alpha (514 aa).

ATP is bound at residue 170–177; sequence GDRQIGKT.

The protein belongs to the ATPase alpha/beta chains family. F-type ATPases have 2 components, CF(1) - the catalytic core - and CF(0) - the membrane proton channel. CF(1) has five subunits: alpha(3), beta(3), gamma(1), delta(1), epsilon(1). CF(0) has three main subunits: a(1), b(2) and c(9-12). The alpha and beta chains form an alternating ring which encloses part of the gamma chain. CF(1) is attached to CF(0) by a central stalk formed by the gamma and epsilon chains, while a peripheral stalk is formed by the delta and b chains.

The protein resides in the cell inner membrane. The enzyme catalyses ATP + H2O + 4 H(+)(in) = ADP + phosphate + 5 H(+)(out). Functionally, produces ATP from ADP in the presence of a proton gradient across the membrane. The alpha chain is a regulatory subunit. The chain is ATP synthase subunit alpha from Pseudomonas fluorescens (strain Pf0-1).